A 213-amino-acid chain; its full sequence is Thymidylate kinase (213 aa).

Residue 10–17 (GLEGAGKT) participates in ATP binding.

It belongs to the thymidylate kinase family.

It carries out the reaction dTMP + ATP = dTDP + ADP. Functionally, phosphorylation of dTMP to form dTDP in both de novo and salvage pathways of dTTP synthesis. The protein is Thymidylate kinase of Shigella boydii serotype 18 (strain CDC 3083-94 / BS512).